A 187-amino-acid chain; its full sequence is Ribonuclease HII (187 aa).

The RNase H type-2 domain occupies 1 to 187; the sequence is MIILGIDEAG…YKPVQVLLNE (187 aa). Residues D7, E8, and D99 each coordinate a divalent metal cation.

This sequence belongs to the RNase HII family. Mn(2+) is required as a cofactor. It depends on Mg(2+) as a cofactor.

Its subcellular location is the cytoplasm. The catalysed reaction is Endonucleolytic cleavage to 5'-phosphomonoester.. Endonuclease that specifically degrades the RNA of RNA-DNA hybrids. The polypeptide is Ribonuclease HII (Francisella tularensis subsp. tularensis (strain FSC 198)).